Reading from the N-terminus, the 214-residue chain is Adenylate kinase (214 aa).

10-15 (GAGKGT) serves as a coordination point for ATP. The interval 30–59 (STGDMFREEISAKSELGRKVEDILKRGELV) is NMP. Residues T31, R36, 57–59 (ELV), 85–88 (GYPR), and Q92 each bind AMP. Residues 126 to 163 (NRRICKNCGKIYNLITLPPKINGKCDVCGGELYQREDD) are LID. Residue R127 coordinates ATP. Residues C130 and C133 each contribute to the Zn(2+) site. 136–137 (IY) is an ATP binding site. Zn(2+)-binding residues include C150 and C153. AMP contacts are provided by R160 and R171. M199 is a binding site for ATP.

It belongs to the adenylate kinase family. In terms of assembly, monomer.

The protein localises to the cytoplasm. It catalyses the reaction AMP + ATP = 2 ADP. It functions in the pathway purine metabolism; AMP biosynthesis via salvage pathway; AMP from ADP: step 1/1. Functionally, catalyzes the reversible transfer of the terminal phosphate group between ATP and AMP. Plays an important role in cellular energy homeostasis and in adenine nucleotide metabolism. This is Adenylate kinase from Thermosipho melanesiensis (strain DSM 12029 / CIP 104789 / BI429).